A 128-amino-acid polypeptide reads, in one-letter code: Holo-[acyl-carrier-protein] synthase (128 aa).

Mg(2+) contacts are provided by D7 and E55.

This sequence belongs to the P-Pant transferase superfamily. AcpS family. Mg(2+) is required as a cofactor.

The protein localises to the cytoplasm. It carries out the reaction apo-[ACP] + CoA = holo-[ACP] + adenosine 3',5'-bisphosphate + H(+). In terms of biological role, transfers the 4'-phosphopantetheine moiety from coenzyme A to a Ser of acyl-carrier-protein. This is Holo-[acyl-carrier-protein] synthase from Moorella thermoacetica (strain ATCC 39073 / JCM 9320).